Consider the following 949-residue polypeptide: Glycine dehydrogenase (decarboxylating) (949 aa).

Residue K704 is modified to N6-(pyridoxal phosphate)lysine.

This sequence belongs to the GcvP family. In terms of assembly, the glycine cleavage system is composed of four proteins: P, T, L and H. Requires pyridoxal 5'-phosphate as cofactor.

The enzyme catalyses N(6)-[(R)-lipoyl]-L-lysyl-[glycine-cleavage complex H protein] + glycine + H(+) = N(6)-[(R)-S(8)-aminomethyldihydrolipoyl]-L-lysyl-[glycine-cleavage complex H protein] + CO2. The glycine cleavage system catalyzes the degradation of glycine. The P protein binds the alpha-amino group of glycine through its pyridoxal phosphate cofactor; CO(2) is released and the remaining methylamine moiety is then transferred to the lipoamide cofactor of the H protein. This chain is Glycine dehydrogenase (decarboxylating), found in Bacteroides fragilis (strain YCH46).